The primary structure comprises 214 residues: NADH-quinone oxidoreductase subunit C (214 aa).

This sequence belongs to the complex I 30 kDa subunit family. As to quaternary structure, NDH-1 is composed of 14 different subunits. Subunits NuoB, C, D, E, F, and G constitute the peripheral sector of the complex.

The protein localises to the cell inner membrane. The enzyme catalyses a quinone + NADH + 5 H(+)(in) = a quinol + NAD(+) + 4 H(+)(out). Functionally, NDH-1 shuttles electrons from NADH, via FMN and iron-sulfur (Fe-S) centers, to quinones in the respiratory chain. The immediate electron acceptor for the enzyme in this species is believed to be ubiquinone. Couples the redox reaction to proton translocation (for every two electrons transferred, four hydrogen ions are translocated across the cytoplasmic membrane), and thus conserves the redox energy in a proton gradient. This is NADH-quinone oxidoreductase subunit C from Caulobacter sp. (strain K31).